We begin with the raw amino-acid sequence, 126 residues long: Large ribosomal subunit protein bL12 (126 aa).

Belongs to the bacterial ribosomal protein bL12 family. As to quaternary structure, homodimer. Part of the ribosomal stalk of the 50S ribosomal subunit. Forms a multimeric L10(L12)X complex, where L10 forms an elongated spine to which 2 to 4 L12 dimers bind in a sequential fashion. Binds GTP-bound translation factors.

In terms of biological role, forms part of the ribosomal stalk which helps the ribosome interact with GTP-bound translation factors. Is thus essential for accurate translation. The chain is Large ribosomal subunit protein bL12 from Saccharophagus degradans (strain 2-40 / ATCC 43961 / DSM 17024).